A 222-amino-acid polypeptide reads, in one-letter code: Glutathione S-transferase alpha-2 (222 aa).

In terms of domain architecture, GST N-terminal spans 3–83 (GKPVLHYFNA…YIATKYDLYG (81 aa)). N6-succinyllysine is present on Lys4. Glutathione is bound by residues Tyr9, Lys45, 54-55 (QV), and 67-68 (QT). The GST C-terminal domain occupies 85 to 208 (DMKERALIDM…QPGSQRKPAM (124 aa)).

This sequence belongs to the GST superfamily. Alpha family. As to quaternary structure, homodimer or heterodimer of GSTA1 and GSTA2.

It localises to the cytoplasm. The catalysed reaction is RX + glutathione = an S-substituted glutathione + a halide anion + H(+). Functionally, catalyzes the conjugation of glutathione to a large variety of electrophilic compounds. The sequence is that of Glutathione S-transferase alpha-2 (Gsta2) from Rattus norvegicus (Rat).